We begin with the raw amino-acid sequence, 141 residues long: Hemoglobin subunit alpha (141 aa).

Residues 1–141 (VLSPADKTNV…VSTVLTSKYR (141 aa)) enclose the Globin domain. Ser-3 is modified (phosphoserine). Lys-7 carries the post-translational modification N6-succinyllysine. A Phosphothreonine modification is found at Thr-8. Lys-11 is subject to N6-succinyllysine. Lys-16 carries the N6-acetyllysine; alternate modification. Lys-16 carries the N6-succinyllysine; alternate modification. Residue Tyr-24 is modified to Phosphotyrosine. Ser-35 bears the Phosphoserine mark. Lys-40 carries the N6-succinyllysine modification. Ser-49 is subject to Phosphoserine. An O2-binding site is contributed by His-58. His-87 is a binding site for heme b. Ser-102 bears the Phosphoserine mark. At Thr-108 the chain carries Phosphothreonine. Ser-124 is subject to Phosphoserine. Phosphothreonine occurs at positions 134 and 137. Ser-138 is modified (phosphoserine).

The protein belongs to the globin family. In terms of assembly, heterotetramer of two alpha chains and two beta chains. Red blood cells.

Its function is as follows. Involved in oxygen transport from the lung to the various peripheral tissues. Functionally, hemopressin acts as an antagonist peptide of the cannabinoid receptor CNR1. Hemopressin-binding efficiently blocks cannabinoid receptor CNR1 and subsequent signaling. This is Hemoglobin subunit alpha (HBA) from Martes foina (Beech marten).